The primary structure comprises 352 residues: MSVPDRKRALEAAIAYIEKQFGAGSIMSLGKHSSAHEISTIKTGALSLDLALGIGGVPKGRIVEIFGPESSGKTTLATHIVANAQKMGGVAAYIDAEHALDPNYAALIGANINDLMISQPDCGEDALSIAELLARSGAVDVIVIDSVAALVPKSELEGEIGDVHVGLQARMMSQALRKLTATLARTNTCAIFINQIREKIGVSFGNPETTTGGRALKFYSSIRIDIRRIGSIKGGENFDIGNRIKVKVAKNKLAPPFRTAEFDILFNEGISSAGCIIDLAVEKNIIDKKGSWFNYQDRKLGQGREAVREELKRNKELFHELERRIYESVQASQAPAAACVDSESREVAEAAK.

67–74 is an ATP binding site; sequence GPESSGKT.

It belongs to the RecA family.

It is found in the cytoplasm. Functionally, can catalyze the hydrolysis of ATP in the presence of single-stranded DNA, the ATP-dependent uptake of single-stranded DNA by duplex DNA, and the ATP-dependent hybridization of homologous single-stranded DNAs. It interacts with LexA causing its activation and leading to its autocatalytic cleavage. In Chlamydia trachomatis serovar L2 (strain ATCC VR-902B / DSM 19102 / 434/Bu), this protein is Protein RecA.